Consider the following 408-residue polypeptide: Na(+)-translocating NADH-quinone reductase subunit F (408 aa).

The helical transmembrane segment at 4 to 24 (IYLGVGMFIAIVLALVLIIMF) threads the bilayer. The 2Fe-2S ferredoxin-type domain occupies 33–127 (GEVTISINGD…DMDIELPEEI (95 aa)). Residues C70, C76, C79, and C111 each coordinate [2Fe-2S] cluster. Positions 130–270 (IKKWDCEVIS…SGPFGEFFAK (141 aa)) constitute an FAD-binding FR-type domain.

This sequence belongs to the NqrF family. Composed of six subunits; NqrA, NqrB, NqrC, NqrD, NqrE and NqrF. [2Fe-2S] cluster serves as cofactor. The cofactor is FAD.

Its subcellular location is the cell inner membrane. The enzyme catalyses a ubiquinone + n Na(+)(in) + NADH + H(+) = a ubiquinol + n Na(+)(out) + NAD(+). In terms of biological role, NQR complex catalyzes the reduction of ubiquinone-1 to ubiquinol by two successive reactions, coupled with the transport of Na(+) ions from the cytoplasm to the periplasm. The first step is catalyzed by NqrF, which accepts electrons from NADH and reduces ubiquinone-1 to ubisemiquinone by a one-electron transfer pathway. The chain is Na(+)-translocating NADH-quinone reductase subunit F from Pseudoalteromonas atlantica (strain T6c / ATCC BAA-1087).